A 415-amino-acid polypeptide reads, in one-letter code: D-galactonate dehydratase family member RspA (415 aa).

Residues N48 and H133 each coordinate substrate. Y170 serves as the catalytic Proton donor/acceptor. Residue D223 participates in Mg(2+) binding. Residue H225 is the Proton donor/acceptor of the active site. Mg(2+) is bound by residues E249, D250, and E275. E275, R296, H325, D329, and E352 together coordinate substrate.

This sequence belongs to the mandelate racemase/muconate lactonizing enzyme family. GalD subfamily. The cofactor is Mg(2+).

It carries out the reaction D-mannonate = 2-dehydro-3-deoxy-D-gluconate + H2O. In terms of biological role, has low D-mannonate dehydratase activity (in vitro), suggesting that this is not a physiological substrate and that it has no significant role in D-mannonate degradation in vivo. Has no detectable activity with a panel of 70 other acid sugars (in vitro). This is D-galactonate dehydratase family member RspA (rspA) from Escherichia coli O6:H1 (strain CFT073 / ATCC 700928 / UPEC).